Consider the following 426-residue polypeptide: Ammonium transporter Rh type A (426 aa).

The Cytoplasmic portion of the chain corresponds to 1-4 (MRFK). The helical transmembrane segment at 5 to 25 (FPLMAIGLEVVMIVLFALFVQ) threads the bilayer. The Extracellular segment spans residues 26 to 54 (YETSVNTSRNPNETESAAMDVEKTMESYP). Asparagine 31 and asparagine 37 each carry an N-linked (GlcNAc...) asparagine glycan. A helical transmembrane segment spans residues 55–75 (FFQDVHIMVFAGFGFLMTFLW). The Cytoplasmic segment spans residues 76-78 (KYG). Residues 79 to 99 (FSGVGINLLIAALGLQWGTII) traverse the membrane as a helical segment. Residues 100–124 (QGIFRSHGQKFLIEMKNMIHADFST) lie on the Extracellular side of the membrane. 2 helical membrane passes run 125-145 (VTVL…QMLI) and 146-166 (MTIL…KILW). Over 167-170 (ASDT) the chain is Extracellular. Residues 171-191 (GESMTIHAFGAYFGLAVAGIL) form a helical membrane-spanning segment. Topologically, residues 192 to 210 (YRSGLKEKHSNEESVYHSD) are cytoplasmic. Residues 211–231 (LFAMIGSLFLWIFWPSFNSAT) form a helical membrane-spanning segment. Over 232-241 (ADEAKKQYRA) the chain is Extracellular. Residues 242 to 262 (IVNTYFSLAASVVTAYACSSL) form a helical membrane-spanning segment. Topologically, residues 263-270 (LESRGKLN) are cytoplasmic. The helical transmembrane segment at 271 to 288 (MVHIQNATLAGGVAVGTC) threads the bilayer. Residues 289 to 292 (ADME) lie on the Extracellular side of the membrane. The helical transmembrane segment at 293–313 (IPPYYAMIIGSIAGAVSVFGF) threads the bilayer. Residues 314–331 (KFLTPLFTTKLRIHDTCG) are Cytoplasmic-facing. The chain crosses the membrane as a helical span at residues 332 to 352 (VHNLHGLPGVIGGLAGIITVA). Topologically, residues 353 to 371 (LEESDSTKTVSQAAALGSS) are extracellular. Residues 372–392 (IATALVGGLITGAILKIPFWA) form a helical membrane-spanning segment. Over 393–426 (QPPDEDCYDDSVYWEVPERKEYDNHFHELLSTLH) the chain is Cytoplasmic.

This sequence belongs to the ammonium transporter (TC 2.A.49) family. Rh subfamily. As to quaternary structure, homodimer. Heterotrimer; a RHCE monomer interacts with a RHAG homodimer. Component of the ankyrin-1 complex in the erythrocyte, composed of ANK1, RHCE, RHAG, SLC4A1, EPB42, GYPA, GYPB and AQP1. Interacts with GYPB (via the N-terminal); this interaction bridges the (RHAG)2(RHCE) heterotrimer with the SLC4A1 Band 3 I dimer complexed with GYPA. In terms of processing, glycosylated.

The protein localises to the membrane. The catalysed reaction is methylamine(out) = methylamine(in). It catalyses the reaction NH4(+)(in) = NH4(+)(out). It carries out the reaction CO2(out) = CO2(in). In terms of biological role, component of the ankyrin-1 complex, a multiprotein complex involved in the stability and shape of the erythrocyte membrane. Heterotrimer with RHCE (RHAG)2(RHCE), that transports ammonium and its related derivative methylammonium, in both neutral and ionic forms, across the erythrocyte membrane. The transport of NH4(+) is electrogenic and masks the NH3 transport. Also, may act as a CO2 channel. Moreover in erythrocyte, regulates RHD membrane expression and is associated with rhesus blood group antigen expression. This is Ammonium transporter Rh type A from Bos taurus (Bovine).